The sequence spans 365 residues: tRNA (guanine(6)-N2)-methyltransferase (365 aa).

A THUMP domain is found at 69-182 (NENSRLLHRV…KDVFFLGIDT (114 aa)). Residues 198–202 (HPAHL), 228–230 (SGT), E248, 276–277 (DA), and N293 each bind S-adenosyl-L-methionine.

Belongs to the methyltransferase superfamily. In terms of assembly, monomer in solution.

It is found in the cytoplasm. The catalysed reaction is guanosine(6) in tRNA + S-adenosyl-L-methionine = N(2)-methylguanosine(6) in tRNA + S-adenosyl-L-homocysteine + H(+). Functionally, S-adenosyl-L-methionine-dependent methyltransferase that catalyzes the methylation of the guanosine nucleotide at position 6 (m2G6) in tRNA(Phe). The polypeptide is tRNA (guanine(6)-N2)-methyltransferase (Pyrococcus furiosus (strain ATCC 43587 / DSM 3638 / JCM 8422 / Vc1)).